The primary structure comprises 364 residues: MKMEMHQIWSRIALASFAFAILFVSVSADDVVVLTEENFEKEVGHDKGALVEFYAPWCGHCKKLAPEYEKLPNSFKKAKSVLIAKVDCDEHKSVCSKYGVSGYPTIQWFPKGSLEPKKFEGPRTAESLAEFVNTEGGTNVKIATAPSHVVVLTPETFNEVVLDGTKDVLVEFYAPWCGHCKSLAPIYEKVAAVFKSEDDVVIANLDADKYRDLAEKYDVSGFPTLKFFPKGNKAGEDYGGGRDLDDFVAFINEKSGTSRDAKGQLTSEAGIVEDLDELVKEFVAANDEEKKAVFARIEEEVKKLEGSASRYGKIYLKVSKKYLEKGSDYAKNEIQRLERLLEKSISPAKADELTLKKNILSTYA.

A signal peptide spans 1–28 (MKMEMHQIWSRIALASFAFAILFVSVSA). 2 consecutive Thioredoxin domains span residues 29–137 (DDVV…TEGG) and 139–256 (NVKI…EKSG). Residues cysteine 58, cysteine 61, cysteine 177, and cysteine 180 each act as nucleophile in the active site. Cystine bridges form between cysteine 58/cysteine 61 and cysteine 177/cysteine 180.

It belongs to the protein disulfide isomerase family.

The protein resides in the endoplasmic reticulum lumen. It carries out the reaction Catalyzes the rearrangement of -S-S- bonds in proteins.. This is Probable protein disulfide-isomerase A6 from Medicago sativa (Alfalfa).